The primary structure comprises 294 residues: GDP-6-deoxy-D-talose 4-dehydrogenase (294 aa).

NAD(+) is bound by residues 11 to 12 (FI), 38 to 39 (DL), 60 to 64 (LAALT), threonine 104, tyrosine 128, lysine 132, and phenylalanine 154. Substrate-binding residues include threonine 104 and tyrosine 128. The active-site Proton acceptor is the tyrosine 128. Substrate-binding residues include asparagine 155 and arginine 190.

This sequence belongs to the NAD(P)-dependent epimerase/dehydratase family.

The enzyme catalyses GDP-6-deoxy-alpha-D-talose + NAD(+) = GDP-4-dehydro-alpha-D-rhamnose + NADH + H(+). It carries out the reaction GDP-6-deoxy-alpha-D-talose + NADP(+) = GDP-4-dehydro-alpha-D-rhamnose + NADPH + H(+). It participates in bacterial outer membrane biogenesis; LPS O-antigen biosynthesis. In terms of biological role, catalyzes the conversion of GDP-4-dehydro-6-deoxy-D-mannose to GDP-6-deoxy-D-talose. The protein is GDP-6-deoxy-D-talose 4-dehydrogenase (tld) of Aggregatibacter actinomycetemcomitans (Actinobacillus actinomycetemcomitans).